The primary structure comprises 34 residues: Potassium channel toxin alpha-KTx 6.2 (34 aa).

Disulfide bonds link C3–C24, C9–C29, C13–C19, and C31–C34. C34 is modified (cysteine amide).

This sequence belongs to the short scorpion toxin superfamily. Potassium channel inhibitor family. Alpha-KTx 06 subfamily. In terms of tissue distribution, expressed by the venom gland.

It is found in the secreted. In terms of biological role, blocks voltage-gated potassium channels Kv1.2/KCNA2 (IC(50)=0.12-0.8 nM), KCa3.1/KCNN4 (IC(50)=1-2.2 nM), Shaker B (IC(50)=2.39-80 nM), Kv1.1/KCNA1 (IC(50)=37-45 or no activity, depending on the study), Kv1.3/KCNA3 (IC(50)=150-180 or no activity, depending on the study). This chain is Potassium channel toxin alpha-KTx 6.2, found in Scorpio palmatus (Israeli golden scorpion).